Here is a 321-residue protein sequence, read N- to C-terminus: MLFILAVIALLITFILVPILIPTLKRMKFGQSIREEGPQSHMKKTGTPTMGGLTFLISIIITSIIAIFFVDNSNPIILLLFVTIGFGLIGFIDDYIIVVKKNNQGLTSKQKFLAQIAIAVVFFLLSDVFHLVEFSTNLNIPFTNISIPLSFAYVIFIVFWQVGFSNAVNLTDGLDGLATGLSIIGFTMYAIMSFVLDSPAIGAFCIIMIFALLGFLPYNLNPAKVFMGDTGSLALGGIFATISIMLNQELSLLLIGLVFVIETASVMLQVASYKLTKKRIFKMSPIHHHFELSGWGEWKVVTVFWTAGLISGLIGLWIGVH.

10 consecutive transmembrane segments (helical) span residues 1–21 (MLFILAVIALLITFILVPILI), 50–70 (MGGLTFLISIIITSIIAIFFV), 76–96 (IILLLFVTIGFGLIGFIDDYI), 112–132 (FLAQIAIAVVFFLLSDVFHLV), 140–160 (IPFTNISIPLSFAYVIFIVFW), 176–196 (GLATGLSIIGFTMYAIMSFVL), 200–220 (AIGAFCIIMIFALLGFLPYNL), 225–245 (VFMGDTGSLALGGIFATISIM), 250–270 (LSLLLIGLVFVIETASVMLQV), and 300–320 (VVTVFWTAGLISGLIGLWIGV).

Belongs to the glycosyltransferase 4 family. MraY subfamily. Requires Mg(2+) as cofactor.

It localises to the cell membrane. The enzyme catalyses UDP-N-acetyl-alpha-D-muramoyl-L-alanyl-gamma-D-glutamyl-L-lysyl-D-alanyl-D-alanine + di-trans,octa-cis-undecaprenyl phosphate = Mur2Ac(oyl-L-Ala-gamma-D-Glu-L-Lys-D-Ala-D-Ala)-di-trans,octa-cis-undecaprenyl diphosphate + UMP. It participates in cell wall biogenesis; peptidoglycan biosynthesis. Its function is as follows. Catalyzes the initial step of the lipid cycle reactions in the biosynthesis of the cell wall peptidoglycan: transfers peptidoglycan precursor phospho-MurNAc-pentapeptide from UDP-MurNAc-pentapeptide onto the lipid carrier undecaprenyl phosphate, yielding undecaprenyl-pyrophosphoryl-MurNAc-pentapeptide, known as lipid I. The polypeptide is Phospho-N-acetylmuramoyl-pentapeptide-transferase (Staphylococcus haemolyticus (strain JCSC1435)).